The chain runs to 195 residues: Glutamyl-tRNA(Gln) amidotransferase subunit C, mitochondrial (195 aa).

A mitochondrion-targeting transit peptide spans 1–18; the sequence is MNLSTIGFQVIFKQRLRC.

Belongs to the GatC family. As to quaternary structure, subunit of the heterotrimeric GatCAB amidotransferase (AdT) complex, composed of A, B and C subunits.

The protein localises to the mitochondrion. It carries out the reaction L-glutamyl-tRNA(Gln) + L-glutamine + ATP + H2O = L-glutaminyl-tRNA(Gln) + L-glutamate + ADP + phosphate + H(+). Its function is as follows. Allows the formation of correctly charged Gln-tRNA(Gln) through the transamidation of misacylated Glu-tRNA(Gln) in the mitochondria. The reaction takes place in the presence of glutamine and ATP through an activated gamma-phospho-Glu-tRNA(Gln). The chain is Glutamyl-tRNA(Gln) amidotransferase subunit C, mitochondrial from Brugia malayi (Filarial nematode worm).